Consider the following 155-residue polypeptide: Ribosomal RNA large subunit methyltransferase H (155 aa).

S-adenosyl-L-methionine-binding positions include leucine 72, glycine 103, and 122 to 127; that span reads LSDLTL.

This sequence belongs to the RNA methyltransferase RlmH family. In terms of assembly, homodimer.

The protein localises to the cytoplasm. The catalysed reaction is pseudouridine(1915) in 23S rRNA + S-adenosyl-L-methionine = N(3)-methylpseudouridine(1915) in 23S rRNA + S-adenosyl-L-homocysteine + H(+). Its function is as follows. Specifically methylates the pseudouridine at position 1915 (m3Psi1915) in 23S rRNA. This chain is Ribosomal RNA large subunit methyltransferase H, found in Albidiferax ferrireducens (strain ATCC BAA-621 / DSM 15236 / T118) (Rhodoferax ferrireducens).